The sequence spans 448 residues: Receptor homology region, transmembrane domain- and RING domain-containing protein 2 (448 aa).

The first 20 residues, 1-20 (MNRALVLLLYVCTVSCLASS), serve as a signal peptide directing secretion. Residues 21–163 (KVILMRNNIT…IPSFENSAWS (143 aa)) are Lumenal-facing. N-linked (GlcNAc...) asparagine glycosylation is found at asparagine 28 and asparagine 74. The PA domain maps to 60 to 144 (DACQNLMNKP…ETGEVLKEYA (85 aa)). Cysteine 62 and cysteine 87 form a disulfide bridge. A helical membrane pass occupies residues 164 to 184 (IMAVSFISLLAMSAVLATCFF). Topologically, residues 185-448 (VRRHRIRRRT…YASANSLPDC (264 aa)) are cytoplasmic. The RING-type; atypical zinc-finger motif lies at 232-274 (CAICLEDYTVGDKLRLLPCCHKFHAACVDSWLTSWRTFCPVCK). Residues 344-378 (QSSSNRRSPPISVSRSSVDLRQQAASPSPSPSQRS) are compositionally biased toward low complexity. 2 disordered regions span residues 344 to 380 (QSSSNRRSPPISVSRSSVDLRQQAASPSPSPSQRSYI) and 402 to 424 (MSPYRPSPSNASPAMAGSSNYPL). The segment covering 408–423 (SPSNASPAMAGSSNYP) has biased composition (polar residues).

Its subcellular location is the protein storage vacuole membrane. The protein localises to the golgi apparatus membrane. Functionally, involved in the trafficking of vacuolar proteins. May function as a sorting receptor for protein trafficking to the protein storage vacuole (PSV). In Arabidopsis thaliana (Mouse-ear cress), this protein is Receptor homology region, transmembrane domain- and RING domain-containing protein 2 (RMR2).